Consider the following 89-residue polypeptide: Small ribosomal subunit protein uS17 (89 aa).

This sequence belongs to the universal ribosomal protein uS17 family. As to quaternary structure, part of the 30S ribosomal subunit.

In terms of biological role, one of the primary rRNA binding proteins, it binds specifically to the 5'-end of 16S ribosomal RNA. The sequence is that of Small ribosomal subunit protein uS17 from Coxiella burnetii (strain RSA 493 / Nine Mile phase I).